The chain runs to 423 residues: Histidine--tRNA ligase (423 aa).

It belongs to the class-II aminoacyl-tRNA synthetase family. In terms of assembly, homodimer.

It is found in the cytoplasm. The catalysed reaction is tRNA(His) + L-histidine + ATP = L-histidyl-tRNA(His) + AMP + diphosphate + H(+). This chain is Histidine--tRNA ligase, found in Geobacillus sp. (strain WCH70).